The following is a 511-amino-acid chain: U3 snoRNP-associated protein-like YAOH (511 aa).

Residues 1–18 (MAPRPRKRVSRPKPRATS) show a composition bias toward basic residues. The interval 1 to 117 (MAPRPRKRVS…EDEDEGEEAG (117 aa)) is disordered. 2 stretches are compositionally biased toward acidic residues: residues 44–53 (EDIESEDSDL) and 66–80 (DDGE…EQET). Basic and acidic residues predominate over residues 81–105 (AGEKKMRIAKELLKKVTDAARRRRE). WD repeat units follow at residues 158-197 (KHRQ…SEKY), 217-256 (KRSK…HIQA), 259-298 (GHRG…YMNC), 301-339 (GHQN…QLLF), 342-380 (PATA…PTHI), 412-451 (SAQS…KGIR), and 457-497 (RLDG…QNGV).

It belongs to the WD repeat RRP9 family.

The protein localises to the nucleus. It is found in the nucleolus. Component of a nucleolar small nuclear ribonucleoprotein particle (snoRNP) thought to participate in the processing and modification of pre-ribosomal RNA. Essential for embryogenesis. The chain is U3 snoRNP-associated protein-like YAOH from Oryza sativa subsp. japonica (Rice).